We begin with the raw amino-acid sequence, 283 residues long: Probable endonuclease 4 (283 aa).

Zn(2+)-binding residues include His-69, His-109, Glu-145, Asp-179, His-182, His-216, Asp-229, His-231, and Glu-261.

This sequence belongs to the AP endonuclease 2 family. The cofactor is Zn(2+).

It carries out the reaction Endonucleolytic cleavage to 5'-phosphooligonucleotide end-products.. Functionally, endonuclease IV plays a role in DNA repair. It cleaves phosphodiester bonds at apurinic or apyrimidinic (AP) sites, generating a 3'-hydroxyl group and a 5'-terminal sugar phosphate. The sequence is that of Probable endonuclease 4 from Campylobacter curvus (strain 525.92).